A 137-amino-acid chain; its full sequence is Protein CTLA-2-alpha (137 aa).

An N-terminal signal peptide occupies residues 1–27; sequence MMVSICEQKLQHFSAVFLLILCLGMMS. Repeat copies occupy residues 39–41 and 42–44. The interval 39 to 44 is 2 X 3 AA tandem repeats of E-W-K; the sequence is EWKEWK. Positions 114–137 are disordered; the sequence is APDLPEYEDLGKNSYLTPGRAQPE.

It to the propeptide regions of cysteine proteases.

Its subcellular location is the secreted. Its function is as follows. Not known, expressed in activated T-cell. The polypeptide is Protein CTLA-2-alpha (Ctla2a) (Mus musculus (Mouse)).